The chain runs to 308 residues: Elongation factor Ts (308 aa).

The interval 80 to 83 (TDFV) is involved in Mg(2+) ion dislocation from EF-Tu.

It belongs to the EF-Ts family.

The protein localises to the cytoplasm. Functionally, associates with the EF-Tu.GDP complex and induces the exchange of GDP to GTP. It remains bound to the aminoacyl-tRNA.EF-Tu.GTP complex up to the GTP hydrolysis stage on the ribosome. This chain is Elongation factor Ts, found in Sphingopyxis alaskensis (strain DSM 13593 / LMG 18877 / RB2256) (Sphingomonas alaskensis).